The primary structure comprises 251 residues: MEGGAAAATPTALPYYVAFSQLLGLTLVAMTGAWLGLYRGGIAWESDLQFNAHPLCMVIGLIFLQGNALLVYRVFRNEAKRTTKVLHGLLHIFALVIALVGLVAVFDYHRKKGYADLYSLHSWCGILVFVLYFVQWLVGFSFFLFPGASFSLRSRYRPQHIFFGATIFLLSVGTALLGLKEALLFNLGGKYSAFEPEGVLANVLGLLLACFGGAVLYILTRADWKRPSQAEEQALSMDFKTLTEGDSPGSQ.

Methionine 1 is modified (N-acetylmethionine). Residues 1–16 are Cytoplasmic-facing; the sequence is MEGGAAAATPTALPYY. Residues 17-37 traverse the membrane as a helical segment; it reads VAFSQLLGLTLVAMTGAWLGL. In terms of domain architecture, Cytochrome b561 spans 19 to 220; it reads FSQLLGLTLV…FGGAVLYILT (202 aa). Over 38-51 the chain is Vesicular; sequence YRGGIAWESDLQFN. The helical transmembrane segment at 52–72 threads the bilayer; it reads AHPLCMVIGLIFLQGNALLVY. Residues histidine 53, arginine 73, and lysine 80 each coordinate heme b. Residues 73–85 lie on the Cytoplasmic side of the membrane; that stretch reads RVFRNEAKRTTKV. Residues lysine 80 and lysine 84 each contribute to the L-ascorbate site. The chain crosses the membrane as a helical span at residues 86–106; it reads LHGLLHIFALVIALVGLVAVF. Heme b contacts are provided by residues histidine 87, 116–119, and histidine 121; that span reads DLYS. The Vesicular portion of the chain corresponds to 107–124; sequence DYHRKKGYADLYSLHSWC. Residues 125–145 traverse the membrane as a helical segment; that stretch reads GILVFVLYFVQWLVGFSFFLF. Residues 146-158 lie on the Cytoplasmic side of the membrane; it reads PGASFSLRSRYRP. An L-ascorbate-binding site is contributed by arginine 153. A helical membrane pass occupies residues 159-179; it reads QHIFFGATIFLLSVGTALLGL. Histidine 160 and glutamate 181 together coordinate heme b. Over 180–198 the chain is Vesicular; that stretch reads KEALLFNLGGKYSAFEPEG. A helical transmembrane segment spans residues 199 to 219; sequence VLANVLGLLLACFGGAVLYIL. The Cytoplasmic portion of the chain corresponds to 220–251; that stretch reads TRADWKRPSQAEEQALSMDFKTLTEGDSPGSQ. Residue lysine 225 participates in heme b binding. Serine 247 carries the phosphoserine modification.

Requires heme b as cofactor. Expressed in many tissues, in particular the brain especially in the cortex and hippocampus.

It is found in the cytoplasmic vesicle. It localises to the secretory vesicle. The protein localises to the chromaffin granule membrane. It carries out the reaction monodehydro-L-ascorbate radical(out) + L-ascorbate(in) = monodehydro-L-ascorbate radical(in) + L-ascorbate(out). In terms of biological role, transmembrane reductase that uses ascorbate as an electron donor in the cytoplasm and transfers electrons across membranes to reduce monodehydro-L-ascorbate radical in the lumen of secretory vesicles. It is therefore involved the regeneration and homeostasis within secretory vesicles of ascorbate which in turn provides reducing equivalents needed to support the activity of intravesicular enzymes. In Homo sapiens (Human), this protein is Transmembrane ascorbate-dependent reductase CYB561.